A 494-amino-acid polypeptide reads, in one-letter code: UPF0371 protein stu1377 (494 aa).

The protein belongs to the UPF0371 family.

This chain is UPF0371 protein stu1377, found in Streptococcus thermophilus (strain ATCC BAA-250 / LMG 18311).